The chain runs to 101 residues: Small ribosomal subunit protein uS10 (101 aa).

It belongs to the universal ribosomal protein uS10 family. In terms of assembly, part of the 30S ribosomal subunit.

Its function is as follows. Involved in the binding of tRNA to the ribosomes. The protein is Small ribosomal subunit protein uS10 of Brachyspira hyodysenteriae (Treponema hyodysenteriae).